Here is a 178-residue protein sequence, read N- to C-terminus: Large ribosomal subunit protein bL25 (178 aa).

It belongs to the bacterial ribosomal protein bL25 family. CTC subfamily. As to quaternary structure, part of the 50S ribosomal subunit; part of the 5S rRNA/L5/L18/L25 subcomplex. Contacts the 5S rRNA. Binds to the 5S rRNA independently of L5 and L18.

Its function is as follows. This is one of the proteins that binds to the 5S RNA in the ribosome where it forms part of the central protuberance. This chain is Large ribosomal subunit protein bL25, found in Campylobacter jejuni subsp. jejuni serotype O:6 (strain 81116 / NCTC 11828).